A 361-amino-acid chain; its full sequence is MSKFSFNIHHQHKKARSGIIVTAHGEMRTPAFMPVGTRGTVKAMLPESVAETGADILLGNTYHLMLQPTAERIVQLGGLHKFMNWDKPILTDSGGFQVMSLSKLCKITEEGVSFSSHINGDKYMLTPERSTEIQYLLGSTITMAFDECTPYPATFEEAKTSMQLTTRWANRSRNAFVKREGYAQFGIIQGSVYEELREQSAKDLVELDFEGYAIGGLAVGEGQELMFKVLDYAPEFLPQNKPRYLMGVGKPVDIIGAVSRGIDMFDCVIPTRSGRNGQAFTKYGTVNIRNSKYADDNKPLEHDCLCPACRNYSKAYLHHLVRIGEILGSMLMTWHNLTYFQNLMSRIRAYIKLGKDFDFDS.

Catalysis depends on D92, which acts as the Proton acceptor. Residues 92 to 96 (DSGGF), D146, Q189, and G216 each bind substrate. The tract at residues 247 to 253 (GVGKPVD) is RNA binding. The Nucleophile role is filled by D266. Residues 271–275 (TRSGR) are RNA binding; important for wobble base 34 recognition. Zn(2+) contacts are provided by C304, C306, C309, and H335.

This sequence belongs to the queuine tRNA-ribosyltransferase family. Homodimer. Within each dimer, one monomer is responsible for RNA recognition and catalysis, while the other monomer binds to the replacement base PreQ1. It depends on Zn(2+) as a cofactor.

The catalysed reaction is 7-aminomethyl-7-carbaguanine + guanosine(34) in tRNA = 7-aminomethyl-7-carbaguanosine(34) in tRNA + guanine. It participates in tRNA modification; tRNA-queuosine biosynthesis. Its function is as follows. Catalyzes the base-exchange of a guanine (G) residue with the queuine precursor 7-aminomethyl-7-deazaguanine (PreQ1) at position 34 (anticodon wobble position) in tRNAs with GU(N) anticodons (tRNA-Asp, -Asn, -His and -Tyr). Catalysis occurs through a double-displacement mechanism. The nucleophile active site attacks the C1' of nucleotide 34 to detach the guanine base from the RNA, forming a covalent enzyme-RNA intermediate. The proton acceptor active site deprotonates the incoming PreQ1, allowing a nucleophilic attack on the C1' of the ribose to form the product. After dissociation, two additional enzymatic reactions on the tRNA convert PreQ1 to queuine (Q), resulting in the hypermodified nucleoside queuosine (7-(((4,5-cis-dihydroxy-2-cyclopenten-1-yl)amino)methyl)-7-deazaguanosine). The sequence is that of Queuine tRNA-ribosyltransferase from Rickettsia africae (strain ESF-5).